The primary structure comprises 636 residues: Protein BCAP (636 aa).

Coiled-coil stretches lie at residues leucine 36–glutamate 97, glutamate 141–glutamine 220, tyrosine 249–asparagine 325, isoleucine 377–glutamate 484, and leucine 519–serine 631.

It belongs to the ODF2 family. As to expression, mainly expressed in trachea and testis. Not detected in bone marrow, bladder, leukocytes. Only weakly detected in tongue, stomach, brain and ovaries.

Its subcellular location is the cytoplasm. It is found in the cytoskeleton. The protein resides in the microtubule organizing center. The protein localises to the centrosome. It localises to the centriole. Its subcellular location is the centriolar satellite. It is found in the cilium basal body. Functionally, acts as a suppressor of ciliogenesis, specifically, the initiation of ciliogenesis. The chain is Protein BCAP from Homo sapiens (Human).